A 631-amino-acid polypeptide reads, in one-letter code: Dolichyl-diphosphooligosaccharide--protein glycosyltransferase subunit 2 (631 aa).

Residues 1-22 form the signal peptide; it reads MAPPGSSAVFLLALTITASVQA. Residues 23 to 540 are Lumenal-facing; sequence LTPTHYLTKQ…REPEKRPPTV (518 aa). Residue Asn106 is glycosylated (N-linked (GlcNAc...) asparagine). A Glycyl lysine isopeptide (Lys-Gly) (interchain with G-Cter in ubiquitin) cross-link involves residue Lys154. A helical membrane pass occupies residues 541-561; that stretch reads VSNTFTALILSPLLLLFALWI. The Cytoplasmic portion of the chain corresponds to 562-571; the sequence is RIGANVSNFT. The helical transmembrane segment at 572–592 threads the bilayer; that stretch reads FAPSTVIFHLGHAAMLGLMYI. The Lumenal segment spans residues 593 to 596; it reads YWTQ. Residues 597–617 form a helical membrane-spanning segment; that stretch reads LNMFQTLKYLAVLGTVTFLAG. Topologically, residues 618–631 are cytoplasmic; sequence NRMLAQHAVKRTAH.

It belongs to the SWP1 family. As to quaternary structure, component of the oligosaccharyltransferase (OST) complex. OST exists in two different complex forms which contain common core subunits RPN1, RPN2, OST48, OST4, DAD1 and TMEM258, either STT3A or STT3B as catalytic subunits, and form-specific accessory subunits. STT3A complex assembly occurs through the formation of 3 subcomplexes. Subcomplex 1 contains RPN1 and TMEM258, subcomplex 2 contains the STT3A-specific subunits STT3A, DC2/OSTC, and KCP2 as well as the core subunit OST4, and subcomplex 3 contains RPN2, DAD1, and OST48. The STT3A complex can form stable complexes with the Sec61 complex or with both the Sec61 and TRAP complexes. Interacts with DDI2. Interacts with TMEM35A/NACHO.

It is found in the endoplasmic reticulum. It localises to the endoplasmic reticulum membrane. It functions in the pathway protein modification; protein glycosylation. Functionally, subunit of the oligosaccharyl transferase (OST) complex that catalyzes the initial transfer of a defined glycan (Glc(3)Man(9)GlcNAc(2) in eukaryotes) from the lipid carrier dolichol-pyrophosphate to an asparagine residue within an Asn-X-Ser/Thr consensus motif in nascent polypeptide chains, the first step in protein N-glycosylation. N-glycosylation occurs cotranslationally and the complex associates with the Sec61 complex at the channel-forming translocon complex that mediates protein translocation across the endoplasmic reticulum (ER). All subunits are required for a maximal enzyme activity. This is Dolichyl-diphosphooligosaccharide--protein glycosyltransferase subunit 2 from Mus musculus (Mouse).